Reading from the N-terminus, the 774-residue chain is Ion-translocating oxidoreductase complex subunit C (774 aa).

2 consecutive 4Fe-4S ferredoxin-type domains span residues 369-397 (GEPQEEQSCIRCSACADACPADLLPQQLY) and 407-436 (KATTHNIADCIECGACAWVCPSNIPLVQYF). Residues Cys377, Cys380, Cys383, Cys387, Cys416, Cys419, Cys422, and Cys426 each contribute to the [4Fe-4S] cluster site. Positions 602 to 750 (KLEQQQANAE…EPEEQIDPRK (149 aa)) are disordered.

The protein belongs to the 4Fe4S bacterial-type ferredoxin family. RnfC subfamily. The complex is composed of six subunits: RsxA, RsxB, RsxC, RsxD, RsxE and RsxG. The cofactor is [4Fe-4S] cluster.

The protein localises to the cell inner membrane. Functionally, part of a membrane-bound complex that couples electron transfer with translocation of ions across the membrane. Required to maintain the reduced state of SoxR. The polypeptide is Ion-translocating oxidoreductase complex subunit C (Escherichia coli O6:K15:H31 (strain 536 / UPEC)).